The primary structure comprises 375 residues: Histidine biosynthesis bifunctional protein HisB (375 aa).

The segment at 1–168 is histidinol-phosphatase; that stretch reads MTPILFVDRD…GIAHELADAP (168 aa). Residue D8 is the Nucleophile of the active site. Residues D8, D10, and D128 each coordinate Mg(2+). D10 (proton donor) is an active-site residue. The segment at 169–375 is imidazoleglycerol-phosphate dehydratase; sequence RRAVVQRNTK…SALPTTKGAL (207 aa).

The protein in the N-terminal section; belongs to the histidinol-phosphatase family. In the C-terminal section; belongs to the imidazoleglycerol-phosphate dehydratase family. Requires Mg(2+) as cofactor.

The protein localises to the cytoplasm. The catalysed reaction is D-erythro-1-(imidazol-4-yl)glycerol 3-phosphate = 3-(imidazol-4-yl)-2-oxopropyl phosphate + H2O. It catalyses the reaction L-histidinol phosphate + H2O = L-histidinol + phosphate. Its pathway is amino-acid biosynthesis; L-histidine biosynthesis; L-histidine from 5-phospho-alpha-D-ribose 1-diphosphate: step 6/9. The protein operates within amino-acid biosynthesis; L-histidine biosynthesis; L-histidine from 5-phospho-alpha-D-ribose 1-diphosphate: step 8/9. This chain is Histidine biosynthesis bifunctional protein HisB, found in Xanthomonas oryzae pv. oryzae (strain MAFF 311018).